A 254-amino-acid chain; its full sequence is UPF0246 protein CPE2152 (254 aa).

The protein belongs to the UPF0246 family.

This Clostridium perfringens (strain 13 / Type A) protein is UPF0246 protein CPE2152.